The following is a 278-amino-acid chain: Transmembrane protein 41B (278 aa).

Residues 1–31 (MQVHERSHTGGHTCQCNHGSEKKAPATGKVH) are disordered. Helical transmembrane passes span 39 to 59 (MSLL…FLVY), 96 to 116 (FYVE…TFAI), 132 to 154 (FPLA…YLLS), 184 to 204 (LINY…FINI), 212 to 232 (PLKV…FVAI), and 249 to 269 (SWNS…PAIF). Positions 127–238 (GFLYPFPLAL…FVAIKAGTTL (112 aa)) are VTT domain; required for its function in autophagy.

It belongs to the TMEM41 family.

It localises to the endoplasmic reticulum membrane. The protein resides in the endomembrane system. The enzyme catalyses a 1,2-diacyl-sn-glycero-3-phospho-L-serine(in) = a 1,2-diacyl-sn-glycero-3-phospho-L-serine(out). It catalyses the reaction cholesterol(in) = cholesterol(out). It carries out the reaction a 1,2-diacyl-sn-glycero-3-phosphocholine(in) = a 1,2-diacyl-sn-glycero-3-phosphocholine(out). The catalysed reaction is a 1,2-diacyl-sn-glycero-3-phosphoethanolamine(in) = a 1,2-diacyl-sn-glycero-3-phosphoethanolamine(out). Its function is as follows. Phospholipid scramblase involved in lipid homeostasis and membrane dynamics processes. Has phospholipid scramblase activity toward cholesterol and phosphatidylserine, as well as phosphatidylethanolamine and phosphatidylcholine. Required for autophagosome formation: participates in early stages of autophagosome biogenesis at the endoplasmic reticulum (ER) membrane by reequilibrating the leaflets of the ER as lipids are extracted by atg2 (atg2a or atg2b) to mediate autophagosome assembly. In addition to autophagy, involved in other processes in which phospholipid scramblase activity is required. Required for normal motor neuron development. This chain is Transmembrane protein 41B, found in Xenopus tropicalis (Western clawed frog).